A 64-amino-acid polypeptide reads, in one-letter code: Alpha-conotoxin-like Ai1.2 (64 aa).

The N-terminal stretch at 1 to 17 (MFTVFLLVVLATTVVSS) is a signal peptide. A propeptide spanning residues 18–43 (TSGRRAFRGRNAAAKASGLVGLTDRR) is cleaved from the precursor. 2 cysteine pairs are disulfide-bonded: Cys-46–Cys-52 and Cys-47–Cys-60. The ser-Xaa-Pro motif, crucial for potent interaction with nAChR stretch occupies residues 48 to 50 (SDP). Gly-61 carries the glycine amide modification.

This sequence belongs to the conotoxin A superfamily. As to expression, expressed by the venom duct.

Its subcellular location is the secreted. Functionally, alpha-conotoxins act on postsynaptic membranes, they bind to the nicotinic acetylcholine receptors (nAChR) and thus inhibit them. This is Alpha-conotoxin-like Ai1.2 from Conus ammiralis (Admiral cone).